The chain runs to 529 residues: DEP domain-containing protein 1B (529 aa).

The region spanning 24–108 (FRARMPLRRH…DNRHLYRFPP (85 aa)) is the DEP domain. A Phosphoserine modification is found at S160. The Rho-GAP domain occupies 201–393 (DSLEEVLNTK…FLMDNYQEIL (193 aa)). Phosphoserine is present on S436.

This Mus musculus (Mouse) protein is DEP domain-containing protein 1B (Depdc1b).